A 61-amino-acid polypeptide reads, in one-letter code: Large ribosomal subunit protein uL30 (61 aa).

It belongs to the universal ribosomal protein uL30 family. In terms of assembly, part of the 50S ribosomal subunit.

This is Large ribosomal subunit protein uL30 from Frankia casuarinae (strain DSM 45818 / CECT 9043 / HFP020203 / CcI3).